The chain runs to 859 residues: Leucine--tRNA ligase (859 aa).

Positions 42–52 (PYPSGRLHMGH) match the 'HIGH' region motif. The 'KMSKS' region signature appears at 618-622 (KMSKS). Lys621 serves as a coordination point for ATP.

This sequence belongs to the class-I aminoacyl-tRNA synthetase family.

The protein localises to the cytoplasm. The enzyme catalyses tRNA(Leu) + L-leucine + ATP = L-leucyl-tRNA(Leu) + AMP + diphosphate. The sequence is that of Leucine--tRNA ligase from Shewanella pealeana (strain ATCC 700345 / ANG-SQ1).